Consider the following 89-residue polypeptide: Small ribosomal subunit protein eS25A (89 aa).

This sequence belongs to the eukaryotic ribosomal protein eS25 family. Component of the small ribosomal subunit (SSU). Mature yeast ribosomes consist of a small (40S) and a large (60S) subunit. The 40S small subunit contains 1 molecule of ribosomal RNA (18S rRNA) and at least 33 different proteins. The large 60S subunit contains 3 rRNA molecules (25S, 5.8S and 5S rRNA) and at least 46 different proteins.

It localises to the cytoplasm. Its function is as follows. Component of the ribosome, a large ribonucleoprotein complex responsible for the synthesis of proteins in the cell. The small ribosomal subunit (SSU) binds messenger RNAs (mRNAs) and translates the encoded message by selecting cognate aminoacyl-transfer RNA (tRNA) molecules. The large subunit (LSU) contains the ribosomal catalytic site termed the peptidyl transferase center (PTC), which catalyzes the formation of peptide bonds, thereby polymerizing the amino acids delivered by tRNAs into a polypeptide chain. The nascent polypeptides leave the ribosome through a tunnel in the LSU and interact with protein factors that function in enzymatic processing, targeting, and the membrane insertion of nascent chains at the exit of the ribosomal tunnel. In Schizosaccharomyces pombe (strain 972 / ATCC 24843) (Fission yeast), this protein is Small ribosomal subunit protein eS25A (rps2502).